The following is a 20-amino-acid chain: Toxin TpF21-Cocle (20 aa).

The region spanning 1 to 20 is the LCN-type CS-alpha/beta domain; the sequence is KDGYLVGNDGCKYSCNTYPK.

It belongs to the long (4 C-C) scorpion toxin superfamily. Sodium channel inhibitor family. Beta subfamily. As to expression, expressed by the venom gland.

It localises to the secreted. Beta toxins bind voltage-independently at site-4 of sodium channels (Nav) and shift the voltage of activation toward more negative potentials thereby affecting sodium channel activation and promoting spontaneous and repetitive firing. This chain is Toxin TpF21-Cocle, found in Tityus pachyurus (Colombian scorpion).